Reading from the N-terminus, the 193-residue chain is Probable nicotinate-nucleotide adenylyltransferase (193 aa).

This sequence belongs to the NadD family.

It carries out the reaction nicotinate beta-D-ribonucleotide + ATP + H(+) = deamido-NAD(+) + diphosphate. It participates in cofactor biosynthesis; NAD(+) biosynthesis; deamido-NAD(+) from nicotinate D-ribonucleotide: step 1/1. Catalyzes the reversible adenylation of nicotinate mononucleotide (NaMN) to nicotinic acid adenine dinucleotide (NaAD). The protein is Probable nicotinate-nucleotide adenylyltransferase of Flavobacterium johnsoniae (strain ATCC 17061 / DSM 2064 / JCM 8514 / BCRC 14874 / CCUG 350202 / NBRC 14942 / NCIMB 11054 / UW101) (Cytophaga johnsonae).